Reading from the N-terminus, the 236-residue chain is Orotidine 5'-phosphate decarboxylase (236 aa).

Residues Asp16, Lys38, 65-74 (DLKLHDIGNT), Thr123, Arg184, Gln193, Gly213, and Arg214 each bind substrate. Lys67 acts as the Proton donor in catalysis.

The protein belongs to the OMP decarboxylase family. Type 1 subfamily. Homodimer.

The catalysed reaction is orotidine 5'-phosphate + H(+) = UMP + CO2. Its pathway is pyrimidine metabolism; UMP biosynthesis via de novo pathway; UMP from orotate: step 2/2. Functionally, catalyzes the decarboxylation of orotidine 5'-monophosphate (OMP) to uridine 5'-monophosphate (UMP). The sequence is that of Orotidine 5'-phosphate decarboxylase from Methylobacterium sp. (strain 4-46).